Consider the following 590-residue polypeptide: Mannosyl-oligosaccharide 1,2-alpha-mannosidase mans-2 (590 aa).

The Cytoplasmic segment spans residues 1–9 (MKTVRFNKQ). The helical; Signal-anchor for type II membrane protein transmembrane segment at 10 to 30 (ALAILAACFIFLLCVVCYFSA) threads the bilayer. The Lumenal segment spans residues 31–590 (SSESHNAVVV…EAHPVPVLTN (560 aa)). A compositionally biased stretch (basic and acidic residues) spans 88–102 (PARVESKPPGEKTST). The interval 88–112 (PARVESKPPGEKTSTEPEETGVGKA) is disordered. Asparagine 156, asparagine 212, asparagine 373, and asparagine 402 each carry an N-linked (GlcNAc...) asparagine glycan. Cysteine 423 and cysteine 456 form a disulfide bridge. Residue glutamate 470 is the Proton donor of the active site. Threonine 580 is a Ca(2+) binding site.

Belongs to the glycosyl hydrolase 47 family. Requires Ca(2+) as cofactor.

The protein localises to the membrane. The enzyme catalyses N(4)-(alpha-D-Man-(1-&gt;2)-alpha-D-Man-(1-&gt;2)-alpha-D-Man-(1-&gt;3)-[alpha-D-Man-(1-&gt;2)-alpha-D-Man-(1-&gt;3)-[alpha-D-Man-(1-&gt;2)-alpha-D-Man-(1-&gt;6)]-alpha-D-Man-(1-&gt;6)]-beta-D-Man-(1-&gt;4)-beta-D-GlcNAc-(1-&gt;4)-beta-D-GlcNAc)-L-asparaginyl-[protein] (N-glucan mannose isomer 9A1,2,3B1,2,3) + 4 H2O = N(4)-(alpha-D-Man-(1-&gt;3)-[alpha-D-Man-(1-&gt;3)-[alpha-D-Man-(1-&gt;6)]-alpha-D-Man-(1-&gt;6)]-beta-D-Man-(1-&gt;4)-beta-D-GlcNAc-(1-&gt;4)-beta-D-GlcNAc)-L-asparaginyl-[protein] (N-glucan mannose isomer 5A1,2) + 4 beta-D-mannose. The catalysed reaction is N(4)-(alpha-D-Man-(1-&gt;2)-alpha-D-Man-(1-&gt;2)-alpha-D-Man-(1-&gt;3)-[alpha-D-Man-(1-&gt;3)-[alpha-D-Man-(1-&gt;2)-alpha-D-Man-(1-&gt;6)]-alpha-D-Man-(1-&gt;6)]-beta-D-Man-(1-&gt;4)-beta-D-GlcNAc-(1-&gt;4)-beta-D-GlcNAc)-L-asparaginyl-[protein] (N-glucan mannose isomer 8A1,2,3B1,3) + 3 H2O = N(4)-(alpha-D-Man-(1-&gt;3)-[alpha-D-Man-(1-&gt;3)-[alpha-D-Man-(1-&gt;6)]-alpha-D-Man-(1-&gt;6)]-beta-D-Man-(1-&gt;4)-beta-D-GlcNAc-(1-&gt;4)-beta-D-GlcNAc)-L-asparaginyl-[protein] (N-glucan mannose isomer 5A1,2) + 3 beta-D-mannose. The protein operates within protein modification; protein glycosylation. In terms of biological role, involved in the maturation of Asn-linked oligosaccharides. Progressively trim alpha-1,2-linked mannose residues from Man(9)GlcNAc(2) to produce Man(5)GlcNAc(2). This Caenorhabditis elegans protein is Mannosyl-oligosaccharide 1,2-alpha-mannosidase mans-2.